The sequence spans 839 residues: Homeobox-leucine zipper protein HOX10 (839 aa).

Disordered stretches follow at residues 1–24 and 132–157; these read MAAAVAMRGSSSDGGGYDKVSGMD and QNTPLANDTSCESNVTTPQNPLRDAS. Residues 24–87 constitute a DNA-binding region (homeobox); the sequence is DSGKYVRYTP…NRRCRDKQRK (64 aa). The stretch at 91 to 134 forms a coiled coil; that stretch reads RLQAVNRKLTAMNKLLMEENERLQKQVSQLVHENAHMRQQLQNT. One can recognise an START domain in the interval 155–383; the sequence is DASNPSGLLS…IAQETSGEVV (229 aa).

Belongs to the HD-ZIP homeobox family. Class III subfamily. In terms of tissue distribution, expressed in stems, leaf sheaths and blades and panicles.

The protein localises to the nucleus. Its function is as follows. Probable transcription factor. The polypeptide is Homeobox-leucine zipper protein HOX10 (HOX10) (Oryza sativa subsp. indica (Rice)).